A 62-amino-acid chain; its full sequence is MTIIFQFALVALVLVSFVLVVGVPVAYATPQNWVESKKLLWLGSGVWIALVLLVGLLNFFVV.

Transmembrane regions (helical) follow at residues 8 to 28 and 41 to 61; these read ALVALVLVSFVLVVGVPVAYA and WLGSGVWIALVLLVGLLNFFV.

This sequence belongs to the PsbZ family. PSII is composed of 1 copy each of membrane proteins PsbA, PsbB, PsbC, PsbD, PsbE, PsbF, PsbH, PsbI, PsbJ, PsbK, PsbL, PsbM, PsbT, PsbX, PsbY, PsbZ, Psb30/Ycf12, peripheral proteins PsbO, CyanoQ (PsbQ), PsbU, PsbV and a large number of cofactors. It forms dimeric complexes.

Its subcellular location is the cellular thylakoid membrane. Its function is as follows. May control the interaction of photosystem II (PSII) cores with the light-harvesting antenna, regulates electron flow through the 2 photosystem reaction centers. PSII is a light-driven water plastoquinone oxidoreductase, using light energy to abstract electrons from H(2)O, generating a proton gradient subsequently used for ATP formation. This chain is Photosystem II reaction center protein Z, found in Nostoc sp. (strain PCC 7120 / SAG 25.82 / UTEX 2576).